The sequence spans 170 residues: Thialysine N-epsilon-acetyltransferase (170 aa).

One can recognise an N-acetyltransferase domain in the interval 4–168 (VRIREAKEGD…FQGEATRKLA (165 aa)). 27-28 (FE) is a binding site for substrate. Lys29 carries the post-translational modification N6-acetyllysine. A substrate-binding site is contributed by Glu92. Residues 94–96 (IYV), 102–107 (GQGIGS), 133–135 (NQR), and Tyr140 each bind acetyl-CoA. Tyr140 functions as the Proton donor in the catalytic mechanism. Glu152 contacts substrate.

The protein belongs to the acetyltransferase family. In terms of assembly, homodimer. As to expression, widely expressed. Under physiological conditions, SSAT2 is expressed at lower level that SSAT1 (SSAT). Many tissues express only SSAT1, several tissues express both SSAT1 and SSAT2, and bone, cervix, ovary and pineal gland expressed only SSAT2.

It localises to the cytoplasm. It carries out the reaction S-(2-aminoethyl)-L-cysteine + acetyl-CoA = S-(2-acetamidoethyl)-L-cysteine + CoA + H(+). The enzyme catalyses an alkane-alpha,omega-diamine + acetyl-CoA = an N-acetylalkane-alpha,omega-diamine + CoA + H(+). In terms of biological role, catalyzes the N-acetylation of the amino acid thialysine (S-(2-aminoethyl)-L-cysteine), a L-lysine analog with the 4-methylene group substituted with a sulfur. May also catalyze acetylation of polyamines, such as norspermidine, spermidine or spermine. However, ability to acetylate polyamines is weak, suggesting that it does not act as a diamine acetyltransferase in vivo. This is Thialysine N-epsilon-acetyltransferase from Homo sapiens (Human).